A 359-amino-acid chain; its full sequence is Hyaluronan and proteoglycan link protein 3 (359 aa).

Positions 1–17 (MSLLFLVLLSPFPCVLG) are cleaved as a signal peptide. The 117-residue stretch at 48-164 (KLVVETTEES…ESGLVELELR (117 aa)) folds into the Ig-like V-type domain. Intrachain disulfides connect cysteine 70–cysteine 146, cysteine 188–cysteine 259, cysteine 212–cysteine 233, cysteine 286–cysteine 355, and cysteine 311–cysteine 332. Link domains lie at 166–261 (VVFP…FCFA) and 266–357 (GRVY…YCYV).

This sequence belongs to the HAPLN family.

It is found in the secreted. Its subcellular location is the extracellular space. The protein resides in the extracellular matrix. Functionally, may function in hyaluronic acid binding. The chain is Hyaluronan and proteoglycan link protein 3 (Hapln3) from Mus musculus (Mouse).